The sequence spans 288 residues: MHGPLAPAPSPERLGAAPARQRSDGRIRLRVGPARPGGGTRILDLAEAGPSRLRFPRGTCALEAVLVNTAGGVACGDSFAIDLALEPGADLVLTTTAAEKIYRSDGPVSRIANTLTLGEGAGLAWLPQETILFDRARVRRRFEADLADGAALIAAEVVAFGRAARGERIVDGLFADSWRIRRGGRLAYADSVLLEGPISDHLARPAIGGGARACATILDVSPGAEARLEEARARLAEAASPGTTAAASAWNGHLAVRALGDAVGPLRGLVARFLAGYRALPMPRVWQS.

Pro residues predominate over residues methionine 1–serine 10. Residues methionine 1–arginine 35 form a disordered region.

This sequence belongs to the UreD family. As to quaternary structure, ureD, UreF and UreG form a complex that acts as a GTP-hydrolysis-dependent molecular chaperone, activating the urease apoprotein by helping to assemble the nickel containing metallocenter of UreC. The UreE protein probably delivers the nickel.

Its subcellular location is the cytoplasm. Required for maturation of urease via the functional incorporation of the urease nickel metallocenter. This Methylobacterium radiotolerans (strain ATCC 27329 / DSM 1819 / JCM 2831 / NBRC 15690 / NCIMB 10815 / 0-1) protein is Urease accessory protein UreD 1.